A 153-amino-acid chain; its full sequence is Regulator of ribonuclease activity B (153 aa).

The tract at residues D114 to H153 is disordered. The span at P115–H153 shows a compositional bias: acidic residues.

Belongs to the RraB family. In terms of assembly, interacts with the C-terminal region of Rne.

Its subcellular location is the cytoplasm. In terms of biological role, globally modulates RNA abundance by binding to RNase E (Rne) and regulating its endonucleolytic activity. Can modulate Rne action in a substrate-dependent manner by altering the composition of the degradosome. The protein is Regulator of ribonuclease activity B of Haemophilus influenzae (strain ATCC 51907 / DSM 11121 / KW20 / Rd).